A 92-amino-acid chain; its full sequence is Large ribosomal subunit protein bL25 (92 aa).

This sequence belongs to the bacterial ribosomal protein bL25 family. In terms of assembly, part of the 50S ribosomal subunit; part of the 5S rRNA/L5/L18/L25 subcomplex. Contacts the 5S rRNA. Binds to the 5S rRNA independently of L5 and L18.

Functionally, this is one of the proteins that binds to the 5S RNA in the ribosome where it forms part of the central protuberance. The chain is Large ribosomal subunit protein bL25 from Aliivibrio fischeri (strain MJ11) (Vibrio fischeri).